The primary structure comprises 299 residues: ATP phosphoribosyltransferase (299 aa).

Belongs to the ATP phosphoribosyltransferase family. Long subfamily. The cofactor is Mg(2+).

The protein resides in the cytoplasm. It catalyses the reaction 1-(5-phospho-beta-D-ribosyl)-ATP + diphosphate = 5-phospho-alpha-D-ribose 1-diphosphate + ATP. It participates in amino-acid biosynthesis; L-histidine biosynthesis; L-histidine from 5-phospho-alpha-D-ribose 1-diphosphate: step 1/9. Feedback inhibited by histidine. Functionally, catalyzes the condensation of ATP and 5-phosphoribose 1-diphosphate to form N'-(5'-phosphoribosyl)-ATP (PR-ATP). Has a crucial role in the pathway because the rate of histidine biosynthesis seems to be controlled primarily by regulation of HisG enzymatic activity. This Campylobacter jejuni subsp. doylei (strain ATCC BAA-1458 / RM4099 / 269.97) protein is ATP phosphoribosyltransferase.